The chain runs to 330 residues: Interleukin-12 subunit beta (330 aa).

The N-terminal stretch at 1 to 22 (MHPQQLVVSWFSLVLLASPIMA) is a signal peptide. The Ig-like C2-type domain maps to 23–106 (IWELEKNVYV…LSHSLLLLHK (84 aa)). Cys-50 and Cys-90 are oxidised to a cystine. 2 N-linked (GlcNAc...) asparagine glycosylation sites follow: Asn-136 and Asn-224. The 92-residue stretch at 239–330 (PPKNLQLKPL…WSEWASVSCS (92 aa)) folds into the Fibronectin type-III domain.

Belongs to the IL-12B family. As to quaternary structure, heterodimer with IL12A; disulfide-linked. The heterodimer is known as interleukin IL-12. Heterodimer with IL23A; disulfide-linked. The heterodimer is known as interleukin IL-23. Also secreted as a monomer. Interacts with NBR1; this interaction promotes IL-12 secretion.

Its subcellular location is the secreted. In terms of biological role, cytokine that can act as a growth factor for activated T and NK cells, enhance the lytic activity of NK/lymphokine-activated killer cells, and stimulate the production of IFN-gamma by resting PBMC. Its function is as follows. Associates with IL23A to form the IL-23 interleukin, a heterodimeric cytokine which functions in innate and adaptive immunity. IL-23 may constitute with IL-17 an acute response to infection in peripheral tissues. IL-23 binds to a heterodimeric receptor complex composed of IL12RB1 and IL23R, activates the Jak-Stat signaling cascade, stimulates memory rather than naive T-cells and promotes production of pro-inflammatory cytokines. IL-23 induces autoimmune inflammation and thus may be responsible for autoimmune inflammatory diseases and may be important for tumorigenesis. This chain is Interleukin-12 subunit beta (IL12B), found in Lama glama (Llama).